A 256-amino-acid chain; its full sequence is UPF0246 protein SPO0106 (256 aa).

Belongs to the UPF0246 family.

The protein is UPF0246 protein SPO0106 of Ruegeria pomeroyi (strain ATCC 700808 / DSM 15171 / DSS-3) (Silicibacter pomeroyi).